The chain runs to 449 residues: Protein tweety homolog 1-A (449 aa).

Residues 1 to 43 (MSTSHGYRASWWTNILHQVPHTNFQFEVVDNQFAPQEWPYQQA) lie on the Extracellular side of the membrane. Residues 44 to 64 (LLFLASIAGLCLAISLILICV) traverse the membrane as a helical segment. At 65–86 (YLIRFCCCASQEDDDSKNHRVC) the chain is on the cytoplasmic side. A helical membrane pass occupies residues 87-107 (CVTWSCVAAVIICCAGIGIGF). Topologically, residues 108–212 (YGNSETNDGV…QVNFIEDYRW (105 aa)) are extracellular. N-linked (GlcNAc...) asparagine glycosylation occurs at N128. A helical membrane pass occupies residues 213-233 (LAYILLLLLDLIICLFTLLGL). Over 234-238 (AKRIK) the chain is Cytoplasmic. Residues 239–259 (WLVIVMTVVSFFVLLLSWGSM) traverse the membrane as a helical segment. At 260-388 (GLEMATAVGL…LKGLCYDGME (129 aa)) the chain is on the extracellular side. 2 cysteine pairs are disulfide-bonded: C273/C383 and C301/C368. N282 and N353 each carry an N-linked (GlcNAc...) asparagine glycan. A helical membrane pass occupies residues 389 to 409 (GILFLLLFSFLSALSFTAAVC). Over 410–449 (SLPRAWKRFQNRDLDYDDMDEDDPFNPQESKRFVQWQSSI) the chain is Cytoplasmic.

Belongs to the tweety family. As to quaternary structure, homotetramer; disulfide-linked. Homodimer.

The protein localises to the cell membrane. It catalyses the reaction chloride(in) = chloride(out). The enzyme catalyses L-glutamate(out) = L-glutamate(in). Functionally, may act as a calcium-independent, swelling-dependent volume-regulated anion channel (VRAC-swell) which plays a pivotal role in the process of regulatory volume decrease (RVD) in the brain through the efflux of anions like chloride and organic osmolytes like glutamate. The polypeptide is Protein tweety homolog 1-A (ttyh1-a) (Xenopus laevis (African clawed frog)).